Here is a 526-residue protein sequence, read N- to C-terminus: Peptide chain release factor 3 (526 aa).

A tr-type G domain is found at 8–277; sequence NKRRTFAIIS…GLTEWAPKPQ (270 aa). GTP is bound by residues 17–24, 85–89, and 139–142; these read SHPDAGKT, DTPGH, and NKLD.

This sequence belongs to the TRAFAC class translation factor GTPase superfamily. Classic translation factor GTPase family. PrfC subfamily.

It is found in the cytoplasm. Functionally, increases the formation of ribosomal termination complexes and stimulates activities of RF-1 and RF-2. It binds guanine nucleotides and has strong preference for UGA stop codons. It may interact directly with the ribosome. The stimulation of RF-1 and RF-2 is significantly reduced by GTP and GDP, but not by GMP. The chain is Peptide chain release factor 3 from Actinobacillus pleuropneumoniae serotype 7 (strain AP76).